Consider the following 228-residue polypeptide: Protein-L-isoaspartate O-methyltransferase (228 aa).

Residue serine 74 is part of the active site.

Belongs to the methyltransferase superfamily. L-isoaspartyl/D-aspartyl protein methyltransferase family.

Its subcellular location is the cytoplasm. The enzyme catalyses [protein]-L-isoaspartate + S-adenosyl-L-methionine = [protein]-L-isoaspartate alpha-methyl ester + S-adenosyl-L-homocysteine. Its function is as follows. Catalyzes the methyl esterification of L-isoaspartyl residues in peptides and proteins that result from spontaneous decomposition of normal L-aspartyl and L-asparaginyl residues. It plays a role in the repair and/or degradation of damaged proteins. The polypeptide is Protein-L-isoaspartate O-methyltransferase (Methylorubrum extorquens (strain PA1) (Methylobacterium extorquens)).